The chain runs to 177 residues: Large ribosomal subunit protein uL6 (177 aa).

Belongs to the universal ribosomal protein uL6 family. Part of the 50S ribosomal subunit.

Its function is as follows. This protein binds to the 23S rRNA, and is important in its secondary structure. It is located near the subunit interface in the base of the L7/L12 stalk, and near the tRNA binding site of the peptidyltransferase center. This is Large ribosomal subunit protein uL6 from Allorhizobium ampelinum (strain ATCC BAA-846 / DSM 112012 / S4) (Agrobacterium vitis (strain S4)).